The chain runs to 89 residues: Small ribosomal subunit protein uS15 (89 aa).

It belongs to the universal ribosomal protein uS15 family. In terms of assembly, part of the 30S ribosomal subunit. Forms a bridge to the 50S subunit in the 70S ribosome, contacting the 23S rRNA.

In terms of biological role, one of the primary rRNA binding proteins, it binds directly to 16S rRNA where it helps nucleate assembly of the platform of the 30S subunit by binding and bridging several RNA helices of the 16S rRNA. Its function is as follows. Forms an intersubunit bridge (bridge B4) with the 23S rRNA of the 50S subunit in the ribosome. The polypeptide is Small ribosomal subunit protein uS15 (Bartonella bacilliformis (strain ATCC 35685 / KC583 / Herrer 020/F12,63)).